An 874-amino-acid polypeptide reads, in one-letter code: MNSWTGLSEQAAIKSRQEHGANFLPEKKATPFWLLFLQQFKSLVVILLLLASLLSFVVAIVSGLRSNWNFNHDLIIEWVQPFIILLTVFANSLIGSIQEFKAQKSASALKSLTKSFTRVFRNGELISINVSEVVVGDIIFVDAGDIIPADGKLLQVNNLRCLESFLTGESTPVDKTIDSNEKATILEQTNLVFSGAQVVYGSGVFQVEAVGIKTQVGKIAKTVDDSVTKLSPLQQKLEKIGKWFSWFGLGLFAVVFLVQTALLGFDNFTNNWSIALIGAIALVVAIIPEGLVTFINVIFALSVQKLTKQKAIIKYLSVIETLGSVQIICTDKTGTLTQNQMKVVDHFCFNSTTQTDLARALCLCNNASISKDANKTGDPTEIALLEWKDRSQLDLKTYYRVYEKAFDSIRKLMTVVVQKDNRFIVIVKGAPDVLLPLCNNVQNEVKNIENLLDQSAGQGLRTLAVALKVLYKFDQNDQKQIDELENNLEFLGFVSLQDPPRKESKEAILACKKANITPIMITGDHLKTATVIAKELGILTLDNQAVLGSELDEKKILDYRVFARVTPQQKLAIVSAWKEAGFTVSVTGDGVNDAPALIKSDVGCCMGITGVDIAKDASDLIISDDNFATIVNGIEEGRKTFLTCKRVLLNLFLTSIAGTVVVLLGLFILGQVFKTNLLQQGHDFQVFSPTQLLIINLFVHGFPAVALAVQPVKEKLMVGSFSTKNLFYNRQGFDLIWQSLFLSFLTLLFYSLGIIYAINNRDLQTSGDLINRAGSTCGFFILGASAALNSLNLMVDKPLLMTNPWFFKLVWIGSLASILVFLLIIFINPLGLVFNVLQDLTNHPVLISYSFGGVILYMGMNEVVKLIRLGYGNI.

At 1-41 the chain is on the cytoplasmic side; the sequence is MNSWTGLSEQAAIKSRQEHGANFLPEKKATPFWLLFLQQFK. A helical transmembrane segment spans residues 42–62; sequence SLVVILLLLASLLSFVVAIVS. The Extracellular portion of the chain corresponds to 63–79; it reads GLRSNWNFNHDLIIEWV. The helical transmembrane segment at 80–100 threads the bilayer; that stretch reads QPFIILLTVFANSLIGSIQEF. The Cytoplasmic segment spans residues 101 to 237; the sequence is KAQKSASALK…TKLSPLQQKL (137 aa). Residues 238–257 form a helical membrane-spanning segment; that stretch reads EKIGKWFSWFGLGLFAVVFL. Topologically, residues 258-275 are extracellular; sequence VQTALLGFDNFTNNWSIA. Residues 276-293 traverse the membrane as a helical segment; that stretch reads LIGAIALVVAIIPEGLVT. At 294 to 644 the chain is on the cytoplasmic side; that stretch reads FINVIFALSV…EEGRKTFLTC (351 aa). Residue Asp331 is the 4-aspartylphosphate intermediate of the active site. Mg(2+) is bound by residues Asp589 and Asp593. Residues 645 to 664 form a helical membrane-spanning segment; it reads KRVLLNLFLTSIAGTVVVLL. The Extracellular segment spans residues 665 to 687; sequence GLFILGQVFKTNLLQQGHDFQVF. A helical transmembrane segment spans residues 688-708; sequence SPTQLLIINLFVHGFPAVALA. The Cytoplasmic segment spans residues 709 to 726; the sequence is VQPVKEKLMVGSFSTKNL. The chain crosses the membrane as a helical span at residues 727–749; it reads FYNRQGFDLIWQSLFLSFLTLLF. At 750–770 the chain is on the extracellular side; that stretch reads YSLGIIYAINNRDLQTSGDLI. The chain crosses the membrane as a helical span at residues 771–790; the sequence is NRAGSTCGFFILGASAALNS. The Cytoplasmic portion of the chain corresponds to 791-803; the sequence is LNLMVDKPLLMTN. The helical transmembrane segment at 804-826 threads the bilayer; it reads PWFFKLVWIGSLASILVFLLIIF. The Extracellular portion of the chain corresponds to 827–844; that stretch reads INPLGLVFNVLQDLTNHP. Residues 845–865 form a helical membrane-spanning segment; it reads VLISYSFGGVILYMGMNEVVK. The Cytoplasmic segment spans residues 866 to 874; that stretch reads LIRLGYGNI.

Belongs to the cation transport ATPase (P-type) (TC 3.A.3) family. Type II subfamily.

The protein localises to the cell membrane. The catalysed reaction is ATP + H2O = ADP + phosphate + H(+). In terms of biological role, could mediate calcium influx. This is Probable cation-transporting P-type ATPase (pacL) from Mycoplasma genitalium (strain ATCC 33530 / DSM 19775 / NCTC 10195 / G37) (Mycoplasmoides genitalium).